A 230-amino-acid polypeptide reads, in one-letter code: MLGFTINKPDVEGVFIKRINRFLGIGLINGVESLVHIHDPGRLKELLKPGIKFYAYHKDSGKTRFYLTAVDLGNELVLINSAIHNNVAAWLIENGLILKGYEVLRREPRFSGGRFDLMLKSPKGGYTMVEVKGVTLEEDGVAKFPDAPTLRGARHMIKLAKAIEEGYEAYVIFLVLRSNALLFTPNVSLDPRFSNALKYAIEHGVKVLAYKLALTRDWVLLPMGRVNVIL.

This sequence belongs to the SfsA family.

The sequence is that of Sugar fermentation stimulation protein homolog from Caldivirga maquilingensis (strain ATCC 700844 / DSM 13496 / JCM 10307 / IC-167).